Consider the following 860-residue polypeptide: Alanine--tRNA ligase (860 aa).

Residues histidine 563, histidine 567, cysteine 665, and histidine 669 each contribute to the Zn(2+) site.

The protein belongs to the class-II aminoacyl-tRNA synthetase family. It depends on Zn(2+) as a cofactor.

It is found in the cytoplasm. It carries out the reaction tRNA(Ala) + L-alanine + ATP = L-alanyl-tRNA(Ala) + AMP + diphosphate. In terms of biological role, catalyzes the attachment of alanine to tRNA(Ala) in a two-step reaction: alanine is first activated by ATP to form Ala-AMP and then transferred to the acceptor end of tRNA(Ala). Also edits incorrectly charged Ser-tRNA(Ala) and Gly-tRNA(Ala) via its editing domain. This Vibrio cholerae serotype O1 (strain ATCC 39541 / Classical Ogawa 395 / O395) protein is Alanine--tRNA ligase.